Here is a 579-residue protein sequence, read N- to C-terminus: Glutamine--tRNA ligase (579 aa).

A 'HIGH' region motif is present at residues 41 to 51 (PEPNGYLHIGH). ATP contacts are provided by residues 42–44 (EPN) and 48–54 (HIGHAKA). The L-glutamine site is built by Asp-74 and Tyr-218. Residues Thr-237, 285–286 (RL), and 293–295 (MSK) each bind ATP. A 'KMSKS' region motif is present at residues 292–296 (VMSKR).

The protein belongs to the class-I aminoacyl-tRNA synthetase family. Monomer.

It is found in the cytoplasm. It carries out the reaction tRNA(Gln) + L-glutamine + ATP = L-glutaminyl-tRNA(Gln) + AMP + diphosphate. The sequence is that of Glutamine--tRNA ligase from Xanthomonas euvesicatoria pv. vesicatoria (strain 85-10) (Xanthomonas campestris pv. vesicatoria).